The chain runs to 493 residues: GPI alpha-1,6-mannosyltransferase 2 (493 aa).

The Cytoplasmic segment spans residues 1–13 (MGLLDPSQKEVLR). The helical transmembrane segment at 14-34 (FAVNCRILTLVLQALFNLIIP) threads the bilayer. Topologically, residues 35–77 (DHHADAFCPPRLAPSGSADQLVEGLLGGLSRWDAEHFLFIAEH) are lumenal. A helical membrane pass occupies residues 78 to 98 (GYLYEHNFAFFPGFPLALLMG). The Cytoplasmic segment spans residues 99-113 (TELLRPLQGLLSQRS). A helical transmembrane segment spans residues 114 to 134 (CLLVSVALLNLLFSVLAAVAL). Topologically, residues 135 to 136 (HD) are lumenal. Residues 137-157 (LGCLVLHCPRQALCAALLFCI) form a helical membrane-spanning segment. Over 158–161 (SPAN) the chain is Cytoplasmic. The helical transmembrane segment at 162-182 (VFLAAGYSEALFAFLTFSAMG) threads the bilayer. Over 183–192 (QLERGRGWAS) the chain is Lumenal. Residues 193 to 213 (GLLFALAAGVRSNGLVSLGFL) traverse the membrane as a helical segment. Residues 214–234 (LHSQCRGFCSSLAVLSPWKPL) lie on the Cytoplasmic side of the membrane. The helical transmembrane segment at 235-255 (VKLMASVCLSVLIVSLPFALF) threads the bilayer. Residues 256–327 (QYRAYIQFCS…RYYELKQVPN (72 aa)) are Lumenal-facing. Residues 328–348 (FLLATPVTVLVVWATWTYVTT) form a helical membrane-spanning segment. At 349 to 378 (HPWLCLTLGLQRTKDRENPEKPHRGFLSPK) the chain is on the cytoplasmic side. Residues 379–399 (VFVYLVHAAALLVFGGLCMHV) form a helical membrane-spanning segment. Over 400 to 469 (QVLTRFLASS…DWKRCSPVTR (70 aa)) the chain is Lumenal. A helical membrane pass occupies residues 470-490 (CVLVYFLTYWLLGLILHCNFL). Over 491–493 (PWT) the chain is Cytoplasmic.

This sequence belongs to the PIGV family. Not N-glycosylated.

The protein localises to the endoplasmic reticulum membrane. Its pathway is glycolipid biosynthesis; glycosylphosphatidylinositol-anchor biosynthesis. In terms of biological role, alpha-1,6-mannosyltransferase that catalyzes the transfer of the second mannose, via an alpha-1,6 bond, from a dolichol-phosphate-mannose (Dol-P-Man) to the alpha-D-Man-(1-&gt;4)-alpha-D-GlcN-(1-&gt;6)-(1-radyl,2-acyl-sn-glycero-3-phospho)-2-acyl-inositol (also termed H2) intermediate to generate an alpha-D-Man-(1-&gt;6)-alpha-D-Man-(1-&gt;4)-alpha-D-GlcN-(1-&gt;6)-(1-radyl,2-acyl-sn-glycero-3-phospho)-2-acyl-inositol (also termed H3) and participates in the seventh step of the glycosylphosphatidylinositol-anchor biosynthesis. Also transfers the second mannose on a 2-PEtn-alpha-D-Man-(1-&gt;4)-alpha-D-GlcN-(1-&gt;6)-(1-radyl,2-acyl-sn-glycero-3-phospho)-2-acyl-inositol (also termed H5). This is GPI alpha-1,6-mannosyltransferase 2 from Mus musculus (Mouse).